The chain runs to 695 residues: MAP kinase phosphatase with leucine-rich repeats protein 2 (695 aa).

LRR repeat units follow at residues 101-122 (SLKS…ITLL), 124-145 (NLNH…LSQL), 147-167 (SLET…NVCK), 170-191 (SLTS…FLNL), 193-214 (NLKD…LPNN), 215-235 (IEKL…SLIR), 239-260 (SLTT…LSCL), 262-283 (NVKT…VLGS), 286-307 (SLVT…VILL), and 309-330 (NLRI…IPTE). Over residues 413–426 (SENNEINENNQLLT) the composition is skewed to low complexity. Disordered regions lie at residues 413–438 (SENN…KNDS) and 492–519 (QEQL…QQQQ). One can recognise a Tyrosine-protein phosphatase domain in the interval 556-695 (VPDLIIDKLY…LKKFEKDLFK (140 aa)). Cysteine 639 functions as the Phosphocysteine intermediate in the catalytic mechanism.

The protein belongs to the protein-tyrosine phosphatase family. Non-receptor class dual specificity subfamily.

The catalysed reaction is O-phospho-L-tyrosyl-[protein] + H2O = L-tyrosyl-[protein] + phosphate. The enzyme catalyses O-phospho-L-seryl-[protein] + H2O = L-seryl-[protein] + phosphate. It carries out the reaction O-phospho-L-threonyl-[protein] + H2O = L-threonyl-[protein] + phosphate. Probable phosphatase with dual specificity toward Ser/Thr and Tyr-containing proteins. The protein is MAP kinase phosphatase with leucine-rich repeats protein 2 (mpl2) of Dictyostelium discoideum (Social amoeba).